The sequence spans 205 residues: Protein phosphatase inhibitor 2 (205 aa).

The interval 1 to 44 (MAASTASHRPIKGILKNKTSTTSSMVASAEQPRGNVDEELSKKS) is disordered. Position 2 is an N-acetylalanine (Ala-2). Required for binding PPP1CC stretches follow at residues 12–17 (KGILKN) and 43–55 (KSQK…ILAT). Residues 17-26 (NKTSTTSSMV) are compositionally biased toward polar residues. A compositionally biased stretch (basic and acidic residues) spans 35-44 (NVDEELSKKS). Ser-44 carries the post-translational modification Phosphoserine; by ATM. Thr-73 bears the Phosphothreonine; by GSK3 mark. Phosphoserine is present on Ser-87. Residues Thr-89 and Thr-92 each carry the phosphothreonine modification. The tract at residues 111–142 (EPKYRIQEQESSGEEDSDLSPEEREKKRQFEM) is disordered. Ser-121, Ser-122, Ser-127, and Ser-130 each carry phosphoserine. Positions 121–130 (SSGEEDSDLS) are enriched in acidic residues. Basic and acidic residues predominate over residues 131–142 (PEEREKKRQFEM). Positions 147-150 (HYNE) are required for binding PPP1CC catalytic center, displacing metal ions and inhibition of PPP1CC catalytic activity. The disordered stretch occupies residues 163 to 205 (KDLHDDDEDEEMLETADGESMNTEESNQGSTPSDQQQNKLRSS). The segment covering 167 to 179 (DDDEDEEMLETAD) has biased composition (acidic residues). Residues 182 to 205 (SMNTEESNQGSTPSDQQQNKLRSS) are compositionally biased toward polar residues.

Belongs to the protein phosphatase inhibitor 2 family. Heterodimer with PP1. Post-translationally, phosphorylation on Thr-73 by GSK3 activates PP1 by dissociating the PP1-PPP1R2 complex. Phosphorylation on Ser-44 by ATM activates PP1 by dissociating the PP1-PPP1R2 complex.

Its function is as follows. Inhibitor of protein-phosphatase 1. This Homo sapiens (Human) protein is Protein phosphatase inhibitor 2 (PPP1R2).